An 89-amino-acid chain; its full sequence is Small ribosomal subunit protein uS14 (89 aa).

This sequence belongs to the universal ribosomal protein uS14 family. Part of the 30S ribosomal subunit. Contacts proteins S3 and S10.

Functionally, binds 16S rRNA, required for the assembly of 30S particles and may also be responsible for determining the conformation of the 16S rRNA at the A site. This Deinococcus radiodurans (strain ATCC 13939 / DSM 20539 / JCM 16871 / CCUG 27074 / LMG 4051 / NBRC 15346 / NCIMB 9279 / VKM B-1422 / R1) protein is Small ribosomal subunit protein uS14.